We begin with the raw amino-acid sequence, 260 residues long: MNQQLIPAIKVKDLSFYYNTSKAIEGISMDIYRNKVTAIIGPSGCGKSTFIKTLNRISELEGPVKVEGVVDFFGQNIYDPRININRLRRQIGMVFQRPNPFPMSIYENVAYGVRISAKLPQADLDEIVESALKGAALWQEVKDKLNKSALGLSGGQQQRLCIARALAIKPKVLLMDEPCSALDPIATMKVEELIHSLRSELTIAIVTHNMQQATRVSDFTAFFSTDESRIGQMVEFGVTTQIFSNPLDSRTRDYVSGRFG.

An ABC transporter domain is found at Ile-9–Val-255. An ATP-binding site is contributed by Gly-41 to Ser-48.

The protein belongs to the ABC transporter superfamily. Phosphate importer (TC 3.A.1.7) family. The complex is composed of two ATP-binding proteins (PstB), two transmembrane proteins (PstC and PstA) and a solute-binding protein (PstS).

It is found in the cell inner membrane. It catalyses the reaction phosphate(out) + ATP + H2O = ADP + 2 phosphate(in) + H(+). In terms of biological role, part of the ABC transporter complex PstSACB involved in phosphate import. Responsible for energy coupling to the transport system. This is Phosphate import ATP-binding protein PstB 5 from Trichormus variabilis (strain ATCC 29413 / PCC 7937) (Anabaena variabilis).